A 363-amino-acid polypeptide reads, in one-letter code: uncharacterized protein (363 aa).

A signal peptide spans 1-20 (MKRAPLITGLLLISTSCAYA).

This sequence belongs to the fimbrial protein family.

The protein localises to the fimbrium. In terms of biological role, part of the yraHIJK fimbrial operon. Could contribute to adhesion to various surfaces in specific environmental niches. Increases adhesion to eukaryotic T24 bladder epithelial cells in the absence of fim operon. This is an uncharacterized protein from Escherichia coli (strain K12).